The sequence spans 447 residues: Phosphoglucosamine mutase (447 aa).

The Phosphoserine intermediate role is filled by Ser106. Mg(2+)-binding residues include Ser106, Asp245, Asp247, and Asp249. Ser106 carries the post-translational modification Phosphoserine.

The protein belongs to the phosphohexose mutase family. Mg(2+) serves as cofactor. Activated by phosphorylation.

It catalyses the reaction alpha-D-glucosamine 1-phosphate = D-glucosamine 6-phosphate. In terms of biological role, catalyzes the conversion of glucosamine-6-phosphate to glucosamine-1-phosphate. The polypeptide is Phosphoglucosamine mutase (Cupriavidus metallidurans (strain ATCC 43123 / DSM 2839 / NBRC 102507 / CH34) (Ralstonia metallidurans)).